The primary structure comprises 376 residues: Alpha-2,8-sialyltransferase 8E (376 aa).

The Cytoplasmic portion of the chain corresponds to M1–T17. A helical; Signal-anchor for type II membrane protein transmembrane segment spans residues L18 to G38. Residues R39–C376 lie on the Lumenal side of the membrane. N-linked (GlcNAc...) asparagine glycans are attached at residues N56 and N96. 2 disulfides stabilise this stretch: C164–C313 and C178–C373. Substrate contacts are provided by residues N192 and N214 to S216. 2 N-linked (GlcNAc...) asparagine glycosylation sites follow: N241 and N284. Residue S300 to G302 participates in substrate binding. Catalysis depends on H348, which acts as the Proton donor/acceptor.

This sequence belongs to the glycosyltransferase 29 family.

Its subcellular location is the golgi apparatus membrane. The enzyme catalyses a ganglioside GQ1c (d18:1(4E)) + CMP-N-acetyl-beta-neuraminate = a ganglioside GP1c (d18:1(4E)) + CMP + H(+). The protein operates within protein modification; protein glycosylation. Functionally, involved in the synthesis of gangliosides GD1c, GT1a, GQ1b, GP1c and GT3 from GD1a, GT1b, GM1b and GD3 respectively. This is Alpha-2,8-sialyltransferase 8E (ST8SIA5) from Pan troglodytes (Chimpanzee).